A 209-amino-acid polypeptide reads, in one-letter code: Rac-like GTP-binding protein ARAC9 (209 aa).

25–32 (GDGAVGKT) contributes to the GTP binding site. Residues 47 to 55 (YVPTVFDNF) carry the Effector region motif. GTP contacts are provided by residues 72 to 76 (DTAGQ) and 130 to 133 (TKSD). Cysteine 206 is subject to Cysteine methyl ester. Cysteine 206 is lipidated: S-geranylgeranyl cysteine. The propeptide at 207–209 (HVL) is removed in mature form.

Belongs to the small GTPase superfamily. Rho family. Interacts with SPK1.

Its subcellular location is the cytoplasm. The protein resides in the membrane. Inactive GDP-bound Rho GTPases reside in the cytosol, are found in a complex with Rho GDP-dissociation inhibitors (Rho GDIs), and are released from the GDI protein in order to translocate to membranes upon activation. The sequence is that of Rac-like GTP-binding protein ARAC9 (ARAC9) from Arabidopsis thaliana (Mouse-ear cress).